Here is a 264-residue protein sequence, read N- to C-terminus: Thymidylate synthase (264 aa).

Residue Arg-21 participates in dUMP binding. His-51 provides a ligand contact to (6R)-5,10-methylene-5,6,7,8-tetrahydrofolate. DUMP is bound at residue 126-127; the sequence is RR. Residue Cys-146 is the Nucleophile of the active site. Residues 166–169, Asn-177, and 207–209 each bind dUMP; these read RSCD and HLY. (6R)-5,10-methylene-5,6,7,8-tetrahydrofolate is bound at residue Asp-169. Ala-263 contributes to the (6R)-5,10-methylene-5,6,7,8-tetrahydrofolate binding site.

This sequence belongs to the thymidylate synthase family. Bacterial-type ThyA subfamily. Homodimer.

The protein localises to the cytoplasm. The enzyme catalyses dUMP + (6R)-5,10-methylene-5,6,7,8-tetrahydrofolate = 7,8-dihydrofolate + dTMP. It functions in the pathway pyrimidine metabolism; dTTP biosynthesis. Catalyzes the reductive methylation of 2'-deoxyuridine-5'-monophosphate (dUMP) to 2'-deoxythymidine-5'-monophosphate (dTMP) while utilizing 5,10-methylenetetrahydrofolate (mTHF) as the methyl donor and reductant in the reaction, yielding dihydrofolate (DHF) as a by-product. This enzymatic reaction provides an intracellular de novo source of dTMP, an essential precursor for DNA biosynthesis. In Cronobacter sakazakii (strain ATCC BAA-894) (Enterobacter sakazakii), this protein is Thymidylate synthase.